A 417-amino-acid polypeptide reads, in one-letter code: C4-dicarboxylate transport protein (417 aa).

8 helical membrane-spanning segments follow: residues 4-26, 41-60, 72-94, 137-159, 180-202, 217-239, 285-307, and 347-369; these read IYVQ…PQIG, KLVI…ARMG, ALIY…GRLI, FIGA…TGFA, LFFG…AMGF, ALVA…GIAW, VVGL…YMTL, and FITL…AILV.

The protein belongs to the dicarboxylate/amino acid:cation symporter (DAACS) (TC 2.A.23) family.

The protein localises to the cell inner membrane. Responsible for the transport of dicarboxylates such as succinate, fumarate, and malate from the periplasm across the membrane. This chain is C4-dicarboxylate transport protein, found in Caulobacter vibrioides (strain ATCC 19089 / CIP 103742 / CB 15) (Caulobacter crescentus).